A 196-amino-acid polypeptide reads, in one-letter code: Rho-related protein racL (196 aa).

Residue 10–17 participates in GTP binding; the sequence is GDGAVGKT. The Effector region motif lies at 32–40; that stretch reads YQPTVFDNF. GTP-binding positions include 57 to 61 and 116 to 119; these read DTAGQ and TQND. Cys193 is subject to Cysteine methyl ester. The S-geranylgeranyl cysteine moiety is linked to residue Cys193. Positions 194-196 are cleaved as a propeptide — removed in mature form; the sequence is IIL.

Belongs to the small GTPase superfamily. Rho family.

The protein localises to the cell membrane. This chain is Rho-related protein racL (racL), found in Dictyostelium discoideum (Social amoeba).